The primary structure comprises 622 residues: Apical membrane antigen 1 (622 aa).

An N-terminal signal peptide occupies residues 1–24 (MRKLYCVLLLSAFEFTYMINFGRG). Over 25–546 (QNYWEHPYQN…EHKPTYDNMK (522 aa)) the chain is Extracellular. Disulfide bonds link Cys-149–Cys-302, Cys-217–Cys-247, Cys-263–Cys-275, Cys-320–Cys-418, and Cys-337–Cys-409. Residues Asn-286, Asn-371, Asn-421, Asn-422, and Asn-499 are each glycosylated (N-linked (GlcNAc...) asparagine). 3 cysteine pairs are disulfide-bonded: Cys-443/Cys-502, Cys-490/Cys-507, and Cys-492/Cys-509. Residues 547–567 (IIIASSAAVAVLATILMVYLY) form a helical membrane-spanning segment. Residues 568 to 622 (KRKGNAEKYDKMDEPQDYGKSTSRNDEMLDPEASFWGEEKRASHTTPVLMEKPYY) are Cytoplasmic-facing. The disordered stretch occupies residues 577–607 (DKMDEPQDYGKSTSRNDEMLDPEASFWGEEK).

The protein belongs to the apicomplexan parasites AMA1 family.

Its subcellular location is the membrane. Its function is as follows. Involved in parasite invasion of erythrocytes. In Plasmodium falciparum (isolate thtn / Thailand), this protein is Apical membrane antigen 1 (AMA-1).